Consider the following 121-residue polypeptide: Holin-like protein CidA 1 (121 aa).

4 consecutive transmembrane segments (helical) span residues 7 to 24 (SGQILLLFCFAWTGEWIA), 28 to 50 (HLPVPGSIIGIFLLLISLKFNLV), 62 to 81 (LLKELILFFIPSAVAVIRYR), and 91 to 113 (LILIIMISTLCVTLVTGLLTELL).

It belongs to the CidA/LrgA family. CidA subfamily.

It is found in the cell membrane. Functionally, increases the activity of extracellular murein hydrolases possibly by mediating their export via hole formation. Inhibited by the antiholin-like proteins LrgAB. In an unstressed cell, the LrgAB products probably inhibit the function of the CidA protein. When a cell is stressed by the addition of antibiotics or by other factors in the environment, CidA possibly oligomerizes within the bacterial cell membrane, creating lesions that disrupt the proton motive force, which in turn results in loss of cell viability. These lesions are also hypothesized to regulate the subsequent cell lysis by either allowing the murein hydrolases access to the cell wall substrate and/or regulating their activity by a possible change in the cell wall pH that results from loss of membrane potential. This chain is Holin-like protein CidA 1 (cidA1), found in Bacillus cereus (strain ATCC 14579 / DSM 31 / CCUG 7414 / JCM 2152 / NBRC 15305 / NCIMB 9373 / NCTC 2599 / NRRL B-3711).